Reading from the N-terminus, the 616-residue chain is Dihydroxy-acid dehydratase (616 aa).

Aspartate 81 is a binding site for Mg(2+). Cysteine 122 is a [2Fe-2S] cluster binding site. 2 residues coordinate Mg(2+): aspartate 123 and lysine 124. Residue lysine 124 is modified to N6-carboxylysine. Cysteine 195 lines the [2Fe-2S] cluster pocket. Glutamate 491 serves as a coordination point for Mg(2+). Catalysis depends on serine 517, which acts as the Proton acceptor.

It belongs to the IlvD/Edd family. As to quaternary structure, homodimer. [2Fe-2S] cluster serves as cofactor. Mg(2+) is required as a cofactor.

The enzyme catalyses (2R)-2,3-dihydroxy-3-methylbutanoate = 3-methyl-2-oxobutanoate + H2O. The catalysed reaction is (2R,3R)-2,3-dihydroxy-3-methylpentanoate = (S)-3-methyl-2-oxopentanoate + H2O. It functions in the pathway amino-acid biosynthesis; L-isoleucine biosynthesis; L-isoleucine from 2-oxobutanoate: step 3/4. Its pathway is amino-acid biosynthesis; L-valine biosynthesis; L-valine from pyruvate: step 3/4. Functionally, functions in the biosynthesis of branched-chain amino acids. Catalyzes the dehydration of (2R,3R)-2,3-dihydroxy-3-methylpentanoate (2,3-dihydroxy-3-methylvalerate) into 2-oxo-3-methylpentanoate (2-oxo-3-methylvalerate) and of (2R)-2,3-dihydroxy-3-methylbutanoate (2,3-dihydroxyisovalerate) into 2-oxo-3-methylbutanoate (2-oxoisovalerate), the penultimate precursor to L-isoleucine and L-valine, respectively. This Salmonella paratyphi C (strain RKS4594) protein is Dihydroxy-acid dehydratase.